The chain runs to 695 residues: ATP-dependent DNA helicase II subunit 2 (695 aa).

One can recognise a Ku domain in the interval 229–461 (FSIGNRDSKD…IDFAVSNYID (233 aa)).

It belongs to the ku80 family. In terms of assembly, heterodimer of pku70 and pku80.

It is found in the nucleus. The protein localises to the chromosome. Its subcellular location is the telomere. It carries out the reaction ATP + H2O = ADP + phosphate + H(+). Its function is as follows. Single-stranded DNA-dependent ATP-dependent helicase. Involved in non-homologous end joining (NHEJ) DNA double strand break repair. DNA-binding is sequence-independent but has a high affinity to nicks in double-stranded DNA and to the ends of duplex DNA. Binds to naturally occurring chromosomal ends, and therefore provides chromosomal end protection. Required also for telomere recombination to repair telomeric ends in the absence of telomerase. ku70, of the ku70/ku80 heterodimer, binds to the stem loop of tlc1, the RNA component of telomerase. Involved in telomere maintenance. Interacts with telomeric repeats and subtelomeric sequences thereby controlling telomere length and protecting against subtelomeric rearrangement. Required for mating-type switching. In Schizosaccharomyces pombe (strain 972 / ATCC 24843) (Fission yeast), this protein is ATP-dependent DNA helicase II subunit 2 (pku80).